Here is a 246-residue protein sequence, read N- to C-terminus: Large ribosomal subunit protein uL3 (246 aa).

Disordered stretches follow at residues 140-162 (SHRSIGSTGGRQDPGKTFKNKKM) and 215-246 (DVPLPGKFRENGSAGASQVEAAPEAPASEENA). At glutamine 151 the chain carries N5-methylglutamine. The span at 234–246 (EAAPEAPASEENA) shows a compositional bias: low complexity.

This sequence belongs to the universal ribosomal protein uL3 family. In terms of assembly, part of the 50S ribosomal subunit. Forms a cluster with proteins L14 and L19. Post-translationally, methylated by PrmB.

Its function is as follows. One of the primary rRNA binding proteins, it binds directly near the 3'-end of the 23S rRNA, where it nucleates assembly of the 50S subunit. In Methylorubrum populi (strain ATCC BAA-705 / NCIMB 13946 / BJ001) (Methylobacterium populi), this protein is Large ribosomal subunit protein uL3.